Consider the following 170-residue polypeptide: dCTP pyrophosphatase 1 (170 aa).

Residues 1–27 are disordered; sequence MSVAGGEIRGDTGGEDTAAPGRFSFSP. An N-acetylserine modification is found at serine 2. Phosphoserine is present on serine 2. At threonine 12 the chain carries Phosphothreonine. Substrate is bound by residues histidine 38 and 47–51; that span reads WEQFH. Residues glutamate 63 and glutamate 66 each contribute to the Mg(2+) site. Residue tryptophan 73 coordinates substrate. Serine 85 carries the phosphoserine modification. Residues glutamate 95 and aspartate 98 each coordinate Mg(2+). Tyrosine 102 serves as a coordination point for substrate. The disordered stretch occupies residues 147 to 170; sequence GAISEDQAVGPADIPCDSTGQTST.

Homotetramer. Mg(2+) is required as a cofactor.

The protein localises to the mitochondrion. Its subcellular location is the nucleus. The protein resides in the cytoplasm. It localises to the cytosol. The catalysed reaction is dCTP + H2O = dCMP + diphosphate + H(+). Its activity is regulated as follows. Inhibited by the reaction end product PPi. Inhibited by dCDP. Inhibited by triptolide. Hydrolyzes deoxynucleoside triphosphates (dNTPs) to the corresponding nucleoside monophosphates. Has a strong preference for dCTP and its analogs including 5-iodo-dCTP and 5-methyl-dCTP for which it may even have a higher efficiency. May protect DNA or RNA against the incorporation of these genotoxic nucleotide analogs through their catabolism. This is dCTP pyrophosphatase 1 from Homo sapiens (Human).